The sequence spans 918 residues: Protein SEY1 homolog (918 aa).

The Cytoplasmic portion of the chain corresponds to 1–701 (MESSNHLPNK…AGTSVSSWRN (701 aa)). One can recognise a GB1/RHD3-type G domain in the interval 46–280 (GFKFNVVTIL…VPSDGFFVYS (235 aa)). 56 to 63 (GSQSSGKS) serves as a coordination point for GTP. Positions 554–626 (SLVLLLKATQ…DALTLLQVLK (73 aa)) form a coiled coil. A helical membrane pass occupies residues 702-722 (IPPVFWLVLLVLGWNELRAAF). The Lumenal portion of the chain corresponds to 723–725 (RVL). Residues 726–746 (LKFYILIPLLIVSYFTFSYSA) traverse the membrane as a helical segment. The Cytoplasmic portion of the chain corresponds to 747-918 (NKLLGPKANE…CGKAVHLAQW (172 aa)).

Belongs to the TRAFAC class dynamin-like GTPase superfamily. GB1/RHD3 GTPase family. RHD3 subfamily.

It is found in the endoplasmic reticulum membrane. In terms of biological role, probable GTP-binding protein that may be involved in cell development. This Theileria annulata protein is Protein SEY1 homolog.